The chain runs to 651 residues: MSGELNGNDTSAQAAVSAGSVLEGAAFADEGEQHNESMKTLVLGALGVVYGDIGTSPIYAFREALHAAATNGILARSDILGVVSLIFWALTLVVTVKYVLFVLRADNNGEGGILSLMALVRAALKGRPDLILGVGICGAALFFGDAVITPAISVLSAMEGLEIVAPNLTPFVVPATVVILVTLFSVQKLGTGRVAIVFGPIMALWFVALGASGLWHIFDDPTVMAALNPYYAVRFLTVSPAVAFVTVGAVFLAMTGAEALYADLGHFGRKPIVRAWLWIVFPCLLLNYFGQAAFILSHGEAAALPFFQMIPSFALWPMVLLATAATVIASQAVITGAYSVARQAVQLNILPRLEIQHTSEKLHGQIYIPRVNLLLGLAVVILVLGFEKSSNLAAAYGIAVTGNMLVTTVLLYIVMTRIWNWRVSRALPIILGFLVIDMLFFSANIIKVHEGGWASIGIATVLVLIMWTWVRGTRHLFQKTRKAEVPLDLIVEQMAKRPPTIVPGTAVFLTGDPKSAPTALMHSLKHYKVLHENNVILTVVTASKPWVASADRARLSQYNERFMLVTLTFGYMQQPNILRALGLCRRLGWKFDIMTTSFFLSRRSLKASVHSGMPLWQDKLFILLARTASDATEYFQIPTGRVVEIGTQVNI.

The next 12 helical transmembrane spans lie at 41–61 (LVLG…IYAF), 82–102 (VVSL…VLFV), 130–150 (LILG…VITP), 163–183 (IVAP…LVTL), 194–214 (VAIV…ASGL), 235–255 (FLTV…LAMT), 276–296 (WLWI…AFIL), 309–329 (MIPS…TVIA), 366–386 (IYIP…VLGF), 395–415 (AYGI…YIVM), 426–446 (ALPI…ANII), and 450–470 (EGGW…WTWV).

This sequence belongs to the HAK/KUP transporter (TC 2.A.72) family.

It is found in the cell inner membrane. The enzyme catalyses K(+)(in) + H(+)(in) = K(+)(out) + H(+)(out). Transport of potassium into the cell. Likely operates as a K(+):H(+) symporter. The polypeptide is Probable potassium transport system protein Kup (Brucella suis (strain ATCC 23445 / NCTC 10510)).